The primary structure comprises 103 residues: Large ribosomal subunit protein uL24 (103 aa).

The protein belongs to the universal ribosomal protein uL24 family. In terms of assembly, part of the 50S ribosomal subunit.

One of two assembly initiator proteins, it binds directly to the 5'-end of the 23S rRNA, where it nucleates assembly of the 50S subunit. Functionally, one of the proteins that surrounds the polypeptide exit tunnel on the outside of the subunit. This chain is Large ribosomal subunit protein uL24, found in Vesicomyosocius okutanii subsp. Calyptogena okutanii (strain HA).